The sequence spans 281 residues: Cytochrome c oxidase subunit 3 (281 aa).

Topologically, residues 1–15 are mitochondrial matrix; sequence MTHQTHAYHMVNPSP. The helical transmembrane segment at 16-34 threads the bilayer; the sequence is WPLTGALSALLLTSGLIMW. The Mitochondrial intermembrane segment spans residues 35 to 40; that stretch reads FHYNSS. A helical transmembrane segment spans residues 41 to 66; the sequence is TLMFMGLTTMLLTMYQWWRDIIREGT. Residues 67 to 72 lie on the Mitochondrial matrix side of the membrane; the sequence is FQGHHT. Residues 73 to 105 form a helical membrane-spanning segment; sequence PVVQKGLRYGMILFILSEVFFFIGFFWAFYHSS. Residues 106-128 lie on the Mitochondrial intermembrane side of the membrane; the sequence is LAPTPELGGCWPPTGIHPLNPLE. Residues 129–152 traverse the membrane as a helical segment; sequence VPLLNTSILLASGVSITWAHHSLM. At 153–155 the chain is on the mitochondrial matrix side; it reads EGN. A helical transmembrane segment spans residues 156–183; the sequence is RKQMIQALLITISLGLYFTILQAMEYYE. Residues 184–190 lie on the Mitochondrial intermembrane side of the membrane; sequence ASFTISD. The chain crosses the membrane as a helical span at residues 191–223; it reads GVYGSTFFVATGFHGLHVIIGSTFLIVCLLRQL. Over 224–232 the chain is Mitochondrial matrix; the sequence is FYHFTSTHH. Residues 233–256 traverse the membrane as a helical segment; sequence FGFEAAAWYWHFVDVVWLFLYVSI. The Mitochondrial intermembrane portion of the chain corresponds to 257-281; sequence YWWGSYFSSMISTTDFQSLSSGSNQ.

Belongs to the cytochrome c oxidase subunit 3 family. As to quaternary structure, component of the cytochrome c oxidase (complex IV, CIV), a multisubunit enzyme composed of 14 subunits. The complex is composed of a catalytic core of 3 subunits MT-CO1, MT-CO2 and MT-CO3, encoded in the mitochondrial DNA, and 11 supernumerary subunits COX4I, COX5A, COX5B, COX6A, COX6B, COX6C, COX7A, COX7B, COX7C, COX8 and NDUFA4, which are encoded in the nuclear genome. The complex exists as a monomer or a dimer and forms supercomplexes (SCs) in the inner mitochondrial membrane with NADH-ubiquinone oxidoreductase (complex I, CI) and ubiquinol-cytochrome c oxidoreductase (cytochrome b-c1 complex, complex III, CIII), resulting in different assemblies (supercomplex SCI(1)III(2)IV(1) and megacomplex MCI(2)III(2)IV(2)).

It is found in the mitochondrion inner membrane. It carries out the reaction 4 Fe(II)-[cytochrome c] + O2 + 8 H(+)(in) = 4 Fe(III)-[cytochrome c] + 2 H2O + 4 H(+)(out). Component of the cytochrome c oxidase, the last enzyme in the mitochondrial electron transport chain which drives oxidative phosphorylation. The respiratory chain contains 3 multisubunit complexes succinate dehydrogenase (complex II, CII), ubiquinol-cytochrome c oxidoreductase (cytochrome b-c1 complex, complex III, CIII) and cytochrome c oxidase (complex IV, CIV), that cooperate to transfer electrons derived from NADH and succinate to molecular oxygen, creating an electrochemical gradient over the inner membrane that drives transmembrane transport and the ATP synthase. Cytochrome c oxidase is the component of the respiratory chain that catalyzes the reduction of oxygen to water. Electrons originating from reduced cytochrome c in the intermembrane space (IMS) are transferred via the dinuclear copper A center (CU(A)) of subunit 2 and heme A of subunit 1 to the active site in subunit 1, a binuclear center (BNC) formed by heme A3 and copper B (CU(B)). The BNC reduces molecular oxygen to 2 water molecules using 4 electrons from cytochrome c in the IMS and 4 protons from the mitochondrial matrix. The polypeptide is Cytochrome c oxidase subunit 3 (MT-CO3) (Didelphis virginiana (North American opossum)).